The following is a 599-amino-acid chain: Elongation factor 4 (599 aa).

One can recognise a tr-type G domain in the interval 2-184 (NHIRNFSIIA…RLVRDIPAPE (183 aa)). GTP is bound by residues 14–19 (DHGKST) and 131–134 (NKID).

The protein belongs to the TRAFAC class translation factor GTPase superfamily. Classic translation factor GTPase family. LepA subfamily.

Its subcellular location is the cell inner membrane. It carries out the reaction GTP + H2O = GDP + phosphate + H(+). Functionally, required for accurate and efficient protein synthesis under certain stress conditions. May act as a fidelity factor of the translation reaction, by catalyzing a one-codon backward translocation of tRNAs on improperly translocated ribosomes. Back-translocation proceeds from a post-translocation (POST) complex to a pre-translocation (PRE) complex, thus giving elongation factor G a second chance to translocate the tRNAs correctly. Binds to ribosomes in a GTP-dependent manner. The chain is Elongation factor 4 from Yersinia pestis (strain Pestoides F).